The chain runs to 34 residues: Unknown protein 5 (34 aa).

The polypeptide is Unknown protein 5 (Pseudotsuga menziesii (Douglas-fir)).